The chain runs to 132 residues: L-ectoine synthase (132 aa).

Belongs to the ectoine synthase family.

The enzyme catalyses (2S)-4-acetamido-2-aminobutanoate = L-ectoine + H2O. It functions in the pathway amine and polyamine biosynthesis; ectoine biosynthesis; L-ectoine from L-aspartate 4-semialdehyde: step 3/3. Functionally, catalyzes the circularization of gamma-N-acetyl-alpha,gamma-diaminobutyric acid (ADABA) to ectoine (1,4,5,6-tetrahydro-2-methyl-4-pyrimidine carboxylic acid), which is an excellent osmoprotectant. This chain is L-ectoine synthase, found in Alkalilimnicola ehrlichii (strain ATCC BAA-1101 / DSM 17681 / MLHE-1).